The sequence spans 433 residues: 26S proteasome regulatory subunit 7 (433 aa).

Residues 1 to 22 form a disordered region; that stretch reads MPDYLGADQRKTKEDEKDDKPI. Positions 8 to 22 are enriched in basic and acidic residues; it reads DQRKTKEDEKDDKPI. Residue Lys-116 is modified to N6-acetyllysine. 216-223 is an ATP binding site; sequence GPPGTGKT. The residue at position 422 (Lys-422) is an N6-acetyllysine.

Belongs to the AAA ATPase family. As to quaternary structure, component of the 19S proteasome regulatory particle complex. The 26S proteasome consists of a 20S core particle (CP) and two 19S regulatory subunits (RP). The regulatory particle is made of a lid composed of 9 subunits, a base containing 6 ATPases including PSMC2 and few additional components. Interacts with NDC80/HEC; this interaction is detected only during M phase. Interacts and SQSTM1. Interacts with PAAF1. Directly interacts with TRIM5. In terms of processing, monoubiquitinated by RNF181. Phosphorylated. Dephosphorylated by UBLCP1 which impairs PSMC2 ATPase activity and disrupts 26S proteasome assembly.

The protein localises to the cytoplasm. The protein resides in the nucleus. In terms of biological role, component of the 26S proteasome, a multiprotein complex involved in the ATP-dependent degradation of ubiquitinated proteins. This complex plays a key role in the maintenance of protein homeostasis by removing misfolded or damaged proteins, which could impair cellular functions, and by removing proteins whose functions are no longer required. Therefore, the proteasome participates in numerous cellular processes, including cell cycle progression, apoptosis, or DNA damage repair. PSMC2 belongs to the heterohexameric ring of AAA (ATPases associated with diverse cellular activities) proteins that unfolds ubiquitinated target proteins that are concurrently translocated into a proteolytic chamber and degraded into peptides. This is 26S proteasome regulatory subunit 7 (PSMC2) from Bos taurus (Bovine).